Here is a 249-residue protein sequence, read N- to C-terminus: Pulmonary surfactant-associated protein A (249 aa).

Positions methionine 1–cysteine 20 are cleaved as a signal peptide. The 73-residue stretch at alanine 28–proline 100 folds into the Collagen-like domain. Residues serine 29–histidine 102 are disordered. A 4-hydroxyproline mark is found at proline 30, proline 33, proline 36, proline 42, proline 54, proline 57, proline 63, and proline 70. Positions proline 42 to lysine 51 are enriched in basic and acidic residues. The span at glutamate 84 to glutamate 93 shows a compositional bias: basic and acidic residues. The C-type lectin domain occupies alanine 133–phenylalanine 249. Intrachain disulfides connect cysteine 155–cysteine 247 and cysteine 225–cysteine 239. N-linked (GlcNAc...) asparagine glycosylation occurs at asparagine 208. Ca(2+) contacts are provided by glutamate 216, arginine 218, asparagine 235, and aspartate 236.

Belongs to the SFTPA family. As to quaternary structure, oligomeric complex of 6 set of homotrimers.

It is found in the secreted. It localises to the extracellular space. Its subcellular location is the extracellular matrix. The protein localises to the surface film. Functionally, in presence of calcium ions, it binds to surfactant phospholipids and contributes to lower the surface tension at the air-liquid interface in the alveoli of the mammalian lung and is essential for normal respiration. Enhances the expression of MYO18A/SP-R210 on alveolar macrophages. The polypeptide is Pulmonary surfactant-associated protein A (SFTPA1) (Sus scrofa (Pig)).